We begin with the raw amino-acid sequence, 408 residues long: Guanine nucleotide-binding protein alpha-14 subunit (408 aa).

Residues 39 to 46, 79 to 86, 201 to 205, 216 to 222, 241 to 245, 285 to 288, 325 to 328, and Ala-380 contribute to the GTP site; these read HSEELEAK, GGPLSGKS, TRIAD, VHSRKAT, DVGGQ, FPKF, and NKVD. Residues 71 to 408 form the G-alpha domain; the sequence is SHIKILILGG…KANAKATGLS (338 aa). The G1 motif stretch occupies residues 74-87; it reads KILILGGPLSGKST. Residue Ser-86 coordinates Mg(2+). The tract at residues 214–222 is G2 motif; the sequence is DIVHSRKAT. Thr-222 contributes to the Mg(2+) binding site. Residues 237-246 form a G3 motif region; the sequence is LLMIDVGGQR. The tract at residues 321 to 328 is G4 motif; the sequence is LLFFNKVD. A G5 motif region spans residues 378–383; it reads TTATNT.

It belongs to the G-alpha family. As to quaternary structure, g proteins are composed of 3 units; alpha, beta and gamma. The alpha chain contains the guanine nucleotide binding site. Interacts with the dopamine receptor dop-2 (via C-terminus); the interaction is direct.

Functionally, guanine nucleotide-binding proteins (G proteins) are involved as modulators or transducers in various transmembrane signaling systems. In association with the G-protein coupled dopamine receptor dop-2, modulates two types of learning: touch habituation and chemosensory associative conditioning. The sequence is that of Guanine nucleotide-binding protein alpha-14 subunit from Caenorhabditis elegans.